The following is a 292-amino-acid chain: G1/S-specific cyclin-D3 (292 aa).

In terms of domain architecture, Cyclin N-terminal spans 27 to 152; it reads VLQSLLRLEE…LVLGKLKWDL (126 aa). The tract at residues 255–292 is disordered; the sequence is LREAAQTSPSPAPKAPRGSSSQGPSQTSTPTDVTAIHL. Phosphoserine occurs at positions 264 and 279. Over residues 272 to 285 the composition is skewed to low complexity; the sequence is GSSSQGPSQTSTPT. Thr283 is subject to Phosphothreonine.

Belongs to the cyclin family. Cyclin D subfamily. Interacts with the CDK4 and CDK6 protein kinases to form a serine/threonine kinase holoenzyme complex. The cyclin subunit imparts substrate specificity to the complex. Interacts with ATF5. Interacts with EIF3K. Component of the ternary complex cyclin D/CDK4/CDKN1B required for nuclear translocation and modulation of CDK4-mediated kinase activity. Can form similar complexes with either CDKN1A or CDKN2A. Post-translationally, phosphorylation at Thr-283 by MAP kinases is required for ubiquitination and degradation by the DCX(AMBRA1) complex. In terms of processing, ubiquitinated by the DCX(AMBRA1) complex during the transition from G1 to S cell phase, leading to its degradation: ubiquitination is dependent on Thr-283 phosphorylation. The DCX(AMBRA1) complex represents the major regulator of CCND3 stability during the G1/S transition. Polyubiquitinated by the SCF(FBXL2) complex, leading to proteasomal degradation.

It is found in the nucleus. The protein localises to the cytoplasm. In terms of biological role, regulatory component of the cyclin D3-CDK4 (DC) complex that phosphorylates and inhibits members of the retinoblastoma (RB) protein family including RB1 and regulates the cell-cycle during G(1)/S transition. Phosphorylation of RB1 allows dissociation of the transcription factor E2F from the RB/E2F complex and the subsequent transcription of E2F target genes which are responsible for the progression through the G(1) phase. Hypophosphorylates RB1 in early G(1) phase. Cyclin D-CDK4 complexes are major integrators of various mitogenenic and antimitogenic signals. Component of the ternary complex, cyclin D3/CDK4/CDKN1B, required for nuclear translocation and activity of the cyclin D-CDK4 complex. Shows transcriptional coactivator activity with ATF5 independently of CDK4. In Bos taurus (Bovine), this protein is G1/S-specific cyclin-D3 (CCND3).